We begin with the raw amino-acid sequence, 399 residues long: Acetate kinase (399 aa).

N8 contributes to the Mg(2+) binding site. K15 is an ATP binding site. R89 serves as a coordination point for substrate. Residue D146 is the Proton donor/acceptor of the active site. ATP is bound by residues 206-210, 283-285, and 331-335; these read HVGNG, DMR, and GMGEN. E383 lines the Mg(2+) pocket.

This sequence belongs to the acetokinase family. Homodimer. It depends on Mg(2+) as a cofactor. Requires Mn(2+) as cofactor.

The protein resides in the cytoplasm. It catalyses the reaction acetate + ATP = acetyl phosphate + ADP. It functions in the pathway metabolic intermediate biosynthesis; acetyl-CoA biosynthesis; acetyl-CoA from acetate: step 1/2. Its function is as follows. Catalyzes the formation of acetyl phosphate from acetate and ATP. Can also catalyze the reverse reaction. The protein is Acetate kinase of Streptococcus equi subsp. equi (strain 4047).